The sequence spans 282 residues: NADPH-dependent 7-cyano-7-deazaguanine reductase (282 aa).

88–90 (IES) serves as a coordination point for substrate. Position 90–91 (90–91 (SK)) interacts with NADPH. Catalysis depends on C190, which acts as the Thioimide intermediate. D197 serves as the catalytic Proton donor. Position 229–230 (229–230 (HE)) interacts with substrate. An NADPH-binding site is contributed by 258–259 (RG).

This sequence belongs to the GTP cyclohydrolase I family. QueF type 2 subfamily. Homodimer.

The protein localises to the cytoplasm. It catalyses the reaction 7-aminomethyl-7-carbaguanine + 2 NADP(+) = 7-cyano-7-deazaguanine + 2 NADPH + 3 H(+). It participates in tRNA modification; tRNA-queuosine biosynthesis. Catalyzes the NADPH-dependent reduction of 7-cyano-7-deazaguanine (preQ0) to 7-aminomethyl-7-deazaguanine (preQ1). In Escherichia coli (strain UTI89 / UPEC), this protein is NADPH-dependent 7-cyano-7-deazaguanine reductase.